The sequence spans 811 residues: Bifunctional enzyme MurC/Ddl (811 aa).

A UDP-N-acetylmuramate--alanine ligase region spans residues 1 to 450; the sequence is MNRKNHYHFI…GNALKDFEPK (450 aa). Residues 111–117 and 607–662 contribute to the ATP site; these read GSHGKTT and LETF…SREI. Residues 451–811 are D-alanine--D-alanine ligase; that stretch reads KLSVGVVCGG…NKQCLLTAKS (361 aa). Residues 574-785 enclose the ATP-grasp domain; it reads KRLAASVGVP…FEQIVHQLII (212 aa). D739, E752, and N754 together coordinate Mg(2+).

In the N-terminal section; belongs to the MurCDEF family. It in the C-terminal section; belongs to the D-alanine--D-alanine ligase family. Requires Mg(2+) as cofactor. The cofactor is Mn(2+).

It localises to the cytoplasm. It catalyses the reaction UDP-N-acetyl-alpha-D-muramate + L-alanine + ATP = UDP-N-acetyl-alpha-D-muramoyl-L-alanine + ADP + phosphate + H(+). It carries out the reaction 2 D-alanine + ATP = D-alanyl-D-alanine + ADP + phosphate + H(+). It functions in the pathway cell wall biogenesis; peptidoglycan biosynthesis. This Chlamydia caviae (strain ATCC VR-813 / DSM 19441 / 03DC25 / GPIC) (Chlamydophila caviae) protein is Bifunctional enzyme MurC/Ddl (murC/ddlA).